A 195-amino-acid chain; its full sequence is Protein GrpE (195 aa).

This sequence belongs to the GrpE family. As to quaternary structure, homodimer.

The protein resides in the cytoplasm. Participates actively in the response to hyperosmotic and heat shock by preventing the aggregation of stress-denatured proteins, in association with DnaK and GrpE. It is the nucleotide exchange factor for DnaK and may function as a thermosensor. Unfolded proteins bind initially to DnaJ; upon interaction with the DnaJ-bound protein, DnaK hydrolyzes its bound ATP, resulting in the formation of a stable complex. GrpE releases ADP from DnaK; ATP binding to DnaK triggers the release of the substrate protein, thus completing the reaction cycle. Several rounds of ATP-dependent interactions between DnaJ, DnaK and GrpE are required for fully efficient folding. The polypeptide is Protein GrpE (Blochmanniella pennsylvanica (strain BPEN)).